A 282-amino-acid chain; its full sequence is AB hydrolase superfamily protein FGSG_00045 (282 aa).

Residues 1 to 10 (MAPISSTRPS) are compositionally biased toward polar residues. The segment at 1 to 22 (MAPISSTRPSHSIAADNPNPTT) is disordered. The 249-residue stretch at 22–270 (TQVNFNTNMT…FADMVKRWII (249 aa)) folds into the AB hydrolase-1 domain.

Belongs to the AB hydrolase superfamily.

The protein operates within mycotoxin biosynthesis. Its function is as follows. AB hydrolase superfamily protein; part of the gene cluster that mediates the biosynthesis of gramillins A and B, bicyclic lipopeptides that induce cell death in maize leaves but not in wheat leaves. The nonribosomal peptide synthetase GRA1 incorporates respectively a glutamic adic (Glu), a leucine (Leu), a serine (Ser), a hydroxyglutamine (HOGln), a 2-amino decanoic acid, and 2 cysteins (CysB and CysA). The biosynthesis of 2-amino decanoic acid incorporated in gramillins could be initiated by a fatty acid synthase composed of the alpha and beta subunits FGSG_00036 and FGSG_11656. The cytochrome P450 monooxygenase FGSG_15680 could hydroxylate the fatty acid chain. Subsequent oxidation to the ketone by the oxidoreductase FGSG_00048 and transamination by aminotransferase FGSG_00049 could form 2-amino-decanoic acid. On the other hand, FGSG_15680 could also be responsible for the HO-modified glutamine at the gamma-position. Whether hydroxylation occurs on the fully assembled product or on the Gln residue prior to assembly into the gramillins requires further proof. The thioredoxin FGSG_00043 could also be required for the disulfide-bond formation between CysA and CysB. The specific involvement of the remaining proteins from the cluster is more difficult to discern, but could have broader regulatory (FGSG_00040 and FGSG_11657) or enzymatic functions (FGSG_00044 and FGSG_00045). The final C-domain of GRA1 does not possess the expected sequence of a termination CT domain, often implicated in macrocyclization and release of a cyclopeptidein fungal NRPs; and the thioesterase FGSG_00047 may act in concert with the terminal C-domain of GRA1 to catalyze the formation of the macrocyclic anhydride and release of the products. The protein is AB hydrolase superfamily protein FGSG_00045 of Gibberella zeae (strain ATCC MYA-4620 / CBS 123657 / FGSC 9075 / NRRL 31084 / PH-1) (Wheat head blight fungus).